Here is a 194-residue protein sequence, read N- to C-terminus: Adenylate kinase isoenzyme 1 (194 aa).

N-acetylmethionine is present on Met1. 18-23 (GSGKGT) is an ATP binding site. Phosphoserine is present on Ser38. Residues 38–67 (STGDLLRAEVSSGSARGKKLSEIMEKGQLV) are NMP. Residues Thr39, Arg44, 65–67 (QLV), 94–97 (GYPR), and Gln101 each bind AMP. The LID stretch occupies residues 131-141 (KRGETSGRVDD). Arg132 provides a ligand contact to ATP. Positions 138 and 149 each coordinate AMP. Residue Gly177 coordinates ATP.

Belongs to the adenylate kinase family. AK1 subfamily. As to quaternary structure, monomer. Mg(2+) is required as a cofactor.

It localises to the cytoplasm. It carries out the reaction a ribonucleoside 5'-phosphate + ATP = a ribonucleoside 5'-diphosphate + ADP. The enzyme catalyses AMP + ATP = 2 ADP. It catalyses the reaction dAMP + ATP = dADP + ADP. The catalysed reaction is dATP + AMP = dADP + ADP. It carries out the reaction dAMP + dATP = 2 dADP. The enzyme catalyses a 2'-deoxyribonucleoside 5'-diphosphate + ATP = a 2'-deoxyribonucleoside 5'-triphosphate + ADP. It catalyses the reaction a ribonucleoside 5'-diphosphate + ATP = a ribonucleoside 5'-triphosphate + ADP. The catalysed reaction is CDP + GTP = CTP + GDP. It carries out the reaction GDP + ATP = GTP + ADP. The enzyme catalyses UDP + ATP = UTP + ADP. It catalyses the reaction GTP + UDP = UTP + GDP. The catalysed reaction is dTDP + GTP = dTTP + GDP. It carries out the reaction dCDP + GTP = dCTP + GDP. The enzyme catalyses dGDP + ATP = dGTP + ADP. It catalyses the reaction dADP + GTP = dATP + GDP. The catalysed reaction is thiamine diphosphate + ADP = thiamine triphosphate + AMP. In terms of biological role, catalyzes the reversible transfer of the terminal phosphate group between ATP and AMP. Also displays broad nucleoside diphosphate kinase activity. Plays an important role in cellular energy homeostasis and in adenine nucleotide metabolism. Also catalyzes at a very low rate the synthesis of thiamine triphosphate (ThTP) from thiamine diphosphate (ThDP) and ADP. This Oryctolagus cuniculus (Rabbit) protein is Adenylate kinase isoenzyme 1.